Here is an 891-residue protein sequence, read N- to C-terminus: MGALLLHPSRRGPAGVVASWTSSPAGRDGGVGIAGAWYFPRASSQAREMPQCPTLESQEGENSEEKGDSSKEDPKETVALAFVRENPGAQNGLQNAQQQGKKKRKKKRLVINLSSCRYESVRRAAQQYGFREGGEDDDWTLYWTDYSVSLERVMEMKSYQKINHFPGMSEICRKDLLARNMSRMLKMFPKDFRFFPRTWCLPADWGDLQTYSRSRKNKTYICKPDSGCQGKGIFITRTVKEIKPGEDMICQLYISKPFIIDGFKFDLRIYVLVTSCDPLRIFVYNEGLARFATTSYSRPCTDNLDDICMHLTNYSINKHSSNFSRDAHSGSKRKLSTFSAYLEDHSYNVEQIWRDIEDVIIKTLISAHPIIRHNYHTCFPNHTLNSACFEILGFDILLDHKLKPWLLEVNHSPSFSTDSRLDKEVKDGLLYDTLVLINLESCDKKKVLEEERQRGQFLQQCCSREMRIEEAKGFRAVQLKKTETYEKENCGGFRLIYPSLNSEKYEKFFQDNNSLFQNTVASRAREEYARQLIQELRLKREKKPFQMKKKVEMQGESAGEQVRKKGMRGWQQKQQQKDKAATQASKQYIQPLTLVSYTPDLLLSVRGERKNETDSSLNQEAPTEEASSVFPKLTSAKPFSSLPDLRNINLSSSKLEPSKPNFSIKEAKSASAVNVFTGTVHLTSVETTPESTTQLSISPKSPPTLAVTASSEYSGPETDRVVSFKCKKQQTPPHLTQKKMLKSFLPTKSKSFWESPNTNWTLLKSDMNKPHLISELLTKLQLSGKLSFFPAHYNPKLGMNNLSQNPSLPGECHSRSDSSGEKRQLDVSSLLLQSPQSYNVTLRDLLVIATPAQLDPRPCRSHASAMRDPCMQDQEAYSHCLISGQKGCERS.

2 disordered regions span residues 1–25 and 44–106; these read MGAL…SSPA and SQAR…KRKK. Residues 63–76 are compositionally biased toward basic and acidic residues; that stretch reads SEEKGDSSKEDPKE. Residues 88 to 99 show a composition bias toward low complexity; sequence GAQNGLQNAQQQ. Residues 106–449 enclose the TTL domain; sequence KKRLVINLSS…ESCDKKKVLE (344 aa). ATP contacts are provided by residues K223, 229–230, 251–254, and 264–266; these read QG, QLYI, and KFD. Q229 is an a protein binding site. R290 contributes to the L-glutamate binding site. 312 to 313 contributes to the ATP binding site; the sequence is TN. L-glutamate-binding residues include Y314, S315, and K332. Mg(2+) is bound by residues D395, E408, and N410. Residue H411 participates in a protein binding. Residues 420 to 499 are c-MTBD region; the sequence is RLDKEVKDGL…CGGFRLIYPS (80 aa). K426 contributes to the L-glutamate binding site. Disordered regions lie at residues 546 to 584, 607 to 636, 687 to 711, and 800 to 820; these read QMKK…ATQA, GERK…LTSA, TTPE…TASS, and NNLS…DSSG. Over residues 687-699 the composition is skewed to polar residues; sequence TTPESTTQLSISP.

The protein belongs to the tubulin--tyrosine ligase family. Found in a complex with CEP41. It depends on Mg(2+) as a cofactor.

It localises to the cytoplasm. Its subcellular location is the cytoskeleton. The protein resides in the cilium axoneme. It is found in the cilium basal body. It carries out the reaction L-glutamyl-[protein] + L-glutamate + ATP = gamma-L-glutamyl-L-glutamyl-[protein] + ADP + phosphate + H(+). The catalysed reaction is (L-glutamyl)(n)-gamma-L-glutamyl-L-glutamyl-[protein] + L-glutamate + ATP = (L-glutamyl)(n+1)-gamma-L-glutamyl-L-glutamyl-[protein] + ADP + phosphate + H(+). Functionally, polyglutamylase which modifies both tubulin and non-tubulin proteins, generating alpha-linked polyglutamate side chains on the gamma-carboxyl group of specific glutamate residues of target proteins. Preferentially mediates ATP-dependent long polyglutamate chain elongation over the initiation step of the polyglutamylation reaction. Preferentially modifies the alpha-tubulin tail over a beta-tail. Promotes tubulin polyglutamylation which stimulates spastin/SPAST-mediated microtubule severing, thereby regulating microtubule functions. Mediates microtubule polyglutamylation in primary cilia axoneme, which is important for ciliary structural formation and motility. Mediates microtubule polyglutamylation in motile cilia, necessary for the regulation of ciliary coordinated beating. Polyglutamylates non-tubulin protein nucleotidyltransferase CGAS, leading to CGAS DNA-binding inhibition, thereby preventing antiviral defense response. This chain is Tubulin polyglutamylase TTLL6, found in Homo sapiens (Human).